The sequence spans 197 residues: Holliday junction branch migration complex subunit RuvA (197 aa).

The segment at 1–64 (MYEYIKGKYI…EDFIGVYGFL (64 aa)) is domain I. The interval 65-144 (TKDELSMFKL…DILEEDDEQI (80 aa)) is domain II. The tract at residues 145–149 (INKVA) is flexible linker. The tract at residues 149–197 (ADDKKVLEAVAALVTLGYSEKEANKVINSCDKNNSLEQIIKEALKYLMK) is domain III.

The protein belongs to the RuvA family. As to quaternary structure, homotetramer. Forms an RuvA(8)-RuvB(12)-Holliday junction (HJ) complex. HJ DNA is sandwiched between 2 RuvA tetramers; dsDNA enters through RuvA and exits via RuvB. An RuvB hexamer assembles on each DNA strand where it exits the tetramer. Each RuvB hexamer is contacted by two RuvA subunits (via domain III) on 2 adjacent RuvB subunits; this complex drives branch migration. In the full resolvosome a probable DNA-RuvA(4)-RuvB(12)-RuvC(2) complex forms which resolves the HJ.

It localises to the cytoplasm. Its function is as follows. The RuvA-RuvB-RuvC complex processes Holliday junction (HJ) DNA during genetic recombination and DNA repair, while the RuvA-RuvB complex plays an important role in the rescue of blocked DNA replication forks via replication fork reversal (RFR). RuvA specifically binds to HJ cruciform DNA, conferring on it an open structure. The RuvB hexamer acts as an ATP-dependent pump, pulling dsDNA into and through the RuvAB complex. HJ branch migration allows RuvC to scan DNA until it finds its consensus sequence, where it cleaves and resolves the cruciform DNA. The sequence is that of Holliday junction branch migration complex subunit RuvA from Clostridium botulinum (strain ATCC 19397 / Type A).